A 429-amino-acid polypeptide reads, in one-letter code: Serine/threonine-protein kinase BGLF4 (429 aa).

A disordered region spans residues 1-27 (MDVNMAAELSPTNSSSSGELSVSPEPP). The 409-residue stretch at 1-409 (MDVNMAAELS…CRPRFEHPHL (409 aa)) folds into the Protein kinase domain. The span at 14–23 (SSSSGELSVS) shows a compositional bias: low complexity. The SUMO interaction motif stretch occupies residues 36–40 (KVTVI). ATP-binding positions include 110–118 (LYHELMVCD) and Glu-128. Asp-195 functions as the Proton acceptor in the catalytic mechanism. The tract at residues 344–350 (VVLLEVL) is SUMO interaction motif.

The protein belongs to the protein kinase superfamily. Ser/Thr protein kinase family. Interacts with host NUP62 and NUP153; this interaction plays a role in nuclear targeting of BGLF4. Interacts with host SUMO1 and SUMO2.

It localises to the virion tegument. The protein resides in the host nucleus. It carries out the reaction L-seryl-[protein] + ATP = O-phospho-L-seryl-[protein] + ADP + H(+). The catalysed reaction is L-threonyl-[protein] + ATP = O-phospho-L-threonyl-[protein] + ADP + H(+). Plays many key roles by phosphorylating several proteins including the viral DNA processivity factor BMRF1, EBNA1 or EBNA2. Modifies the host nuclear envelope structure and induces the redistribution of nuclear envelope-associated proteins by phosphorylating host nucleoporins. Subsequently, promotes the nuclear transport of EBV lytic proteins. Required for efficient lytic DNA replication and release of nucleocapsids from the nucleus. Contributes to the compaction of host cell chromatin in cells undergoing lytic replication, presumably by phosphorylating the host condensin complex and host TOP2A. Induces disassembly of the nuclear lamina by phosphorylating with host LMNA. Phosphorylates substrates involved in capsid assembly and DNA packaging. Facilitates the switch from latent to lytic DNA replication by down-regulating EBNA1 replication function. Phosphorylates the viral immediate-early protein BZLF1 and inhibits its sumoylation by interacting with host SUMO1 and SUMO2. Phosphorylates also host SAMHD1 and thereby counteracts its antiviral effect by reducing its dNTP hydrolase activity. This chain is Serine/threonine-protein kinase BGLF4, found in Epstein-Barr virus (strain AG876) (HHV-4).